The following is a 343-amino-acid chain: E3 ubiquitin-protein ligase RNF113A (343 aa).

Alanine 2 is subject to N-acetylalanine. The segment at 2–60 is important for interaction with SNRNP200/BRR2; sequence AEQLSPGKAVDQVCTFLFKKPGRKGAAGRRKRPACDPEPGESGSSSDEGCTVVRPEKKR. Residue serine 6 is modified to Phosphoserine. The segment covering 22–33 has biased composition (basic residues); sequence PGRKGAAGRRKR. The disordered stretch occupies residues 22-96; the sequence is PGRKGAAGRR…EEEENEPESL (75 aa). Residues 41-50 are compositionally biased toward low complexity; sequence GESGSSSDEG. The important for interaction with CXCR4 stretch occupies residues 50-61; sequence GCTVVRPEKKRV. Phosphoserine is present on residues serine 84 and serine 85. Acidic residues predominate over residues 84–93; the sequence is SSEEEEENEP. A C3H1-type zinc finger spans residues 196-224; sequence DYQPDICKDYKETGFCGFGDSCKFLHDRS. A Phosphoserine modification is found at serine 253. The RING-type zinc-finger motif lies at 262-300; the sequence is CFICRQSFQNPVVTKCRHYFCESCALQHFRTTPRCYVCD. A disordered region spans residues 322–343; sequence ATGEGGASDLPEDPDEDAIPIT. Over residues 331–343 the composition is skewed to acidic residues; it reads LPEDPDEDAIPIT.

Component of pre-catalytic and catalytic spliceosome complexes. Interacts (via N-terminus) with the spliceosome subunit SNRNP200/BRR2. Component of the minor spliceosome, which splices U12-type introns. Within this complex, interacts with SCNM1 and CRIPT. As to expression, ubiquitous.

It is found in the nucleus. Its subcellular location is the nucleus speckle. The catalysed reaction is S-ubiquitinyl-[E2 ubiquitin-conjugating enzyme]-L-cysteine + [acceptor protein]-L-lysine = [E2 ubiquitin-conjugating enzyme]-L-cysteine + N(6)-ubiquitinyl-[acceptor protein]-L-lysine.. Its pathway is protein modification; protein ubiquitination. Required for pre-mRNA splicing as component of the spliceosome. As a component of the minor spliceosome, involved in the splicing of U12-type introns in pre-mRNAs. E3 ubiquitin-protein ligase that catalyzes the transfer of ubiquitin onto target proteins. Catalyzes polyubiquitination of SNRNP200/BRR2 with non-canonical 'Lys-63'-linked polyubiquitin chains. Plays a role in DNA repair via its role in the synthesis of 'Lys-63'-linked polyubiquitin chains that recruit ALKBH3 and the ASCC complex to sites of DNA damage by alkylating agents. Ubiquitinates CXCR4, leading to its degradation, and thereby contributes to the termination of CXCR4 signaling. This is E3 ubiquitin-protein ligase RNF113A (RNF113A) from Homo sapiens (Human).